The sequence spans 252 residues: Zinc finger CCCH domain-containing protein 28 (252 aa).

A compositionally biased stretch (basic and acidic residues) spans 1–21 (MSHRRDYGSDAVHVRITHDPP). The interval 1–31 (MSHRRDYGSDAVHVRITHDPPPENCFPNSGD) is disordered. C3H1-type zinc fingers lie at residues 71-99 (FFKT…HSAE) and 143-171 (NWKT…HGPS).

In Arabidopsis thaliana (Mouse-ear cress), this protein is Zinc finger CCCH domain-containing protein 28.